A 161-amino-acid chain; its full sequence is Transcription elongation factor GreA (161 aa).

A coiled-coil region spans residues 43-68; that stretch reads SENAEYEAAREKQAFVEARIKHLEDI.

It belongs to the GreA/GreB family.

Its function is as follows. Necessary for efficient RNA polymerase transcription elongation past template-encoded arresting sites. The arresting sites in DNA have the property of trapping a certain fraction of elongating RNA polymerases that pass through, resulting in locked ternary complexes. Cleavage of the nascent transcript by cleavage factors such as GreA or GreB allows the resumption of elongation from the new 3'terminus. GreA releases sequences of 2 to 3 nucleotides. The chain is Transcription elongation factor GreA from Rickettsia bellii (strain OSU 85-389).